The sequence spans 1171 residues: Zinc finger BED domain-containing protein 4 (1171 aa).

Positions 25–62 (EEEDDDGIPPDSLERMDFKSEQEDMKQTDSGGERAGLG) are disordered. A compositionally biased stretch (basic and acidic residues) spans 36 to 51 (SLERMDFKSEQEDMKQ). A Glycyl lysine isopeptide (Lys-Gly) (interchain with G-Cter in SUMO2) cross-link involves residue lysine 43. 2 BED-type zinc fingers span residues 115 to 172 (RKKS…LIQE) and 285 to 342 (RRRS…VLQE). Residues cysteine 136, cysteine 139, histidine 160, histidine 165, cysteine 306, cysteine 309, histidine 330, and histidine 335 each coordinate Zn(2+). The segment covering 362–385 (LLPPEGELSSVSSSPVKPVRESPS) has biased composition (low complexity). The tract at residues 362–405 (LLPPEGELSSVSSSPVKPVRESPSASSSPDRLTEDLQSHLNPGD) is disordered. 2 consecutive BED-type zinc fingers follow at residues 456-512 (RLKS…VGSQ) and 558-615 (KKTS…LKTE). Positions 477 and 480 each coordinate Zn(2+). Lysine 489 is covalently cross-linked (Glycyl lysine isopeptide (Lys-Gly) (interchain with G-Cter in SUMO2)). 6 residues coordinate Zn(2+): histidine 500, histidine 505, cysteine 579, cysteine 582, histidine 603, and histidine 608. Residues 614 to 640 (TEVSETARPSSPDTRVPRGTELSGASS) are disordered. At serine 624 the chain carries Phosphoserine. The segment at 1086-1171 (LAYLEEEVLE…VNLPLIYFQY (86 aa)) is required for homodimerization and nuclear accumulation.

Homodimer; via C-terminus. Interacts with MYH9. Interacts with SAFB/SAFB1. In terms of tissue distribution, expressed in testis, heart, lung, and weakly expressed in brain, liver, muscle, placenta and small intestine. Expressed in the retina, found in the cone photoreceptors, Mueller cells, cone pedicles and in the innermost retinal layer.

The protein localises to the nucleus. It is found in the cytoplasm. It localises to the photoreceptor inner segment. Functionally, transcriptional regulator that binds to poly-guanine tracts in gene promoters and activates transcription. Able to bind single- and double-stranded DNA and RNA. The sequence is that of Zinc finger BED domain-containing protein 4 (ZBED4) from Homo sapiens (Human).